Reading from the N-terminus, the 256-residue chain is Rhamnolipids biosynthesis 3-oxoacyl-[acyl-carrier-protein] reductase (256 aa).

14-38 is an NADP(+) binding site; it reads VTGGSRGIGQMIAQGLLEAGARVFI. Residue S148 coordinates substrate. The active-site Proton acceptor is Y162.

This sequence belongs to the short-chain dehydrogenases/reductases (SDR) family.

The enzyme catalyses a (3R)-hydroxyacyl-[ACP] + NADP(+) = a 3-oxoacyl-[ACP] + NADPH + H(+). Its pathway is lipid metabolism; rhamnolipid biosynthesis. Its function is as follows. Required for the synthesis of the beta-hydroxy acid moiety of rhamnolipids. The protein is Rhamnolipids biosynthesis 3-oxoacyl-[acyl-carrier-protein] reductase (rhlG) of Pseudomonas aeruginosa (strain ATCC 15692 / DSM 22644 / CIP 104116 / JCM 14847 / LMG 12228 / 1C / PRS 101 / PAO1).